We begin with the raw amino-acid sequence, 208 residues long: Ribosomal RNA large subunit methyltransferase E (208 aa).

The S-adenosyl-L-methionine site is built by Gly61, Trp63, Asp81, Asp97, and Asp122. Lys162 functions as the Proton acceptor in the catalytic mechanism.

The protein belongs to the class I-like SAM-binding methyltransferase superfamily. RNA methyltransferase RlmE family.

It is found in the cytoplasm. It carries out the reaction uridine(2552) in 23S rRNA + S-adenosyl-L-methionine = 2'-O-methyluridine(2552) in 23S rRNA + S-adenosyl-L-homocysteine + H(+). Specifically methylates the uridine in position 2552 of 23S rRNA at the 2'-O position of the ribose in the fully assembled 50S ribosomal subunit. The sequence is that of Ribosomal RNA large subunit methyltransferase E from Pseudomonas putida (strain GB-1).